The sequence spans 22 residues: Major outer membrane protein (22 aa).

It belongs to the Gram-negative porin family. In terms of assembly, disulfide bond interactions within and between MOMP molecules and other components form high molecular-weight oligomers.

The protein resides in the cell outer membrane. In terms of biological role, structural rigidity of the outer membrane of elementary bodies and porin forming, permitting diffusion of solutes through the intracellular reticulate body membrane. This chain is Major outer membrane protein (ompH), found in Avibacterium gallinarum (Pasteurella gallinarum).